The chain runs to 723 residues: LIM domain-binding protein 3 (723 aa).

Residues M1–K84 enclose the PDZ domain. 3 positions are modified to phosphoserine: S44, S98, and D112. Disordered regions lie at residues I89–E134 and S164–N193. T119 is subject to Phosphothreonine. A phosphoserine mark is found at S121 and S123. A Phosphoserine modification is found at S214. Position 216 is an omega-N-methylarginine (R216). 3 positions are modified to phosphoserine: S220, S251, and D288. 2 disordered regions span residues G280–T423 and S436–T525. At A291 the chain carries Omega-N-methylarginine. Low complexity predominate over residues A309 to A376. Residue I327 is modified to Phosphoserine. S330 bears the Omega-N-methylarginine mark. Residues S436–T466 show a composition bias toward pro residues. Residues D490–T509 are compositionally biased toward polar residues. R512 and R529 each carry omega-N-methylarginine. LIM zinc-binding domains follow at residues P545 to A603, P604 to T663, and K664 to V723.

As to quaternary structure, interacts via its LIM domains with various PKC isoforms. Interacts via its PDZ domain with the ACTN2 C-terminal region. Interacts with MYOZ1, MYOZ2 and MYOZ3. As to expression, expressed primarily in adult heart and skeletal muscle, and detected at lower levels in lung. Isoforms are expressed in a tissue-specific manner. Isoform 1, isoform 3 and isoform 5 are expressed in heart, whereas isoform 2, isoform 4 and isoform 6 are expressed in skeletal muscle.

The protein resides in the cytoplasm. It localises to the perinuclear region. The protein localises to the cell projection. Its subcellular location is the pseudopodium. It is found in the cytoskeleton. The protein resides in the myofibril. It localises to the sarcomere. The protein localises to the z line. Functionally, may function as an adapter in striated muscle to couple protein kinase C-mediated signaling via its LIM domains to the cytoskeleton. The sequence is that of LIM domain-binding protein 3 from Mus musculus (Mouse).